We begin with the raw amino-acid sequence, 362 residues long: Putative F-box protein At3g23260 (362 aa).

The F-box domain maps to methionine 1–histidine 46.

The protein is Putative F-box protein At3g23260 of Arabidopsis thaliana (Mouse-ear cress).